Here is a 169-residue protein sequence, read N- to C-terminus: Peptide deformylase (169 aa).

Fe cation is bound by residues Cys94 and His136. Glu137 is a catalytic residue. His140 is a Fe cation binding site.

Belongs to the polypeptide deformylase family. It depends on Fe(2+) as a cofactor.

It carries out the reaction N-terminal N-formyl-L-methionyl-[peptide] + H2O = N-terminal L-methionyl-[peptide] + formate. Removes the formyl group from the N-terminal Met of newly synthesized proteins. Requires at least a dipeptide for an efficient rate of reaction. N-terminal L-methionine is a prerequisite for activity but the enzyme has broad specificity at other positions. This chain is Peptide deformylase, found in Desulfotalea psychrophila (strain LSv54 / DSM 12343).